Consider the following 149-residue polypeptide: Nucleoside diphosphate kinase 1 (149 aa).

ATP-binding residues include K9, F57, R85, T91, R102, and N112. The active-site Pros-phosphohistidine intermediate is the H115.

Belongs to the NDK family. Homohexamer. Can also form dodecamers. It depends on Mg(2+) as a cofactor.

The protein resides in the nucleus. It catalyses the reaction a 2'-deoxyribonucleoside 5'-diphosphate + ATP = a 2'-deoxyribonucleoside 5'-triphosphate + ADP. The enzyme catalyses a ribonucleoside 5'-diphosphate + ATP = a ribonucleoside 5'-triphosphate + ADP. Functionally, major role in the synthesis of nucleoside triphosphates other than ATP. The ATP gamma phosphate is transferred to the NDP beta phosphate via a ping-pong mechanism, using a phosphorylated active-site intermediate. Involved in transcription regulation. Has G-quadruplex (G4) DNA-binding activity, which is independent of its nucleotide-binding and kinase activity. Binds folded G4 with low nanomolar affinity and corresponding unfolded G-rich DNA more weakly. Stabilizes folded G4s regardless of whether they are prefolded or not. The polypeptide is Nucleoside diphosphate kinase 1 (Zea mays (Maize)).